The following is a 317-amino-acid chain: Transcription factor MYB35 (317 aa).

HTH myb-type domains are found at residues 9-65 and 66-116; these read KSNV…RPDL and KHDS…KKKL. DNA-binding regions (H-T-H motif) lie at residues 37 to 61 and 89 to 112; these read WSLI…TNYL and WSSI…NTKL.

As to expression, inflorescences-specific. Accumulates in anthers, especially in tapetum and meiocytes/microsporocytes and microspores during anther development.

The protein resides in the nucleus. Functionally, required for anther development and early tapetal function during microspore maturation. Regulates callose dissolution required for microspores release from the tetrads. This is Transcription factor MYB35 from Arabidopsis thaliana (Mouse-ear cress).